The following is a 345-amino-acid chain: Opioid-binding protein/cell adhesion molecule (345 aa).

Residues 1 to 27 (MGVCGYLFLPWKCLVVVSLRLLFLVPT) form the signal peptide. 3 Ig-like C2-type domains span residues 39–126 (PKAM…PKTS), 136–219 (PQIM…VKIT), and 223–310 (PPYI…ASIT). N-linked (GlcNAc...) asparagine glycans are attached at residues N44, N70, and N140. The cysteines at positions 57 and 115 are disulfide-linked. 2 disulfides stabilise this stretch: C157/C202 and C244/C296. N-linked (GlcNAc...) asparagine glycans are attached at residues N285, N293, and N306. N322 carries the GPI-anchor amidated asparagine lipid modification. Residues 323–345 (SASRALACLWLSGTLLAHFFIKF) constitute a propeptide, removed in mature form.

This sequence belongs to the immunoglobulin superfamily. IgLON family.

It is found in the cell membrane. Functionally, binds opioids in the presence of acidic lipids; probably involved in cell contact. The chain is Opioid-binding protein/cell adhesion molecule (OPCML) from Homo sapiens (Human).